A 312-amino-acid polypeptide reads, in one-letter code: Olfactory receptor 1500 (312 aa).

At 1–25 (MTGNNQTLILEFLLLGLPIPSEYHL) the chain is on the extracellular side. Residue N5 is glycosylated (N-linked (GlcNAc...) asparagine). The helical transmembrane segment at 26–49 (LFYALFLAMYLTIILGNLLIIVLV) threads the bilayer. The Cytoplasmic segment spans residues 50-57 (RLDSHLHM). A helical transmembrane segment spans residues 58–79 (PMYLFLSNLSFSDLCFSSVTMP). The Extracellular portion of the chain corresponds to 80–100 (KLLQNMQSQVPSISYTGCLTQ). Cysteines 97 and 189 form a disulfide. Residues 101 to 120 (LYFFMVFGDMESFLLVVMAY) traverse the membrane as a helical segment. Residues 121–139 (DRYVAICFPLRYTTIMSTK) are Cytoplasmic-facing. The chain crosses the membrane as a helical span at residues 140–158 (FCASLVLLLWMLTMTHALL). Topologically, residues 159–196 (HTLLIARLSFCEKNVILHFFCDISALLKLSCSDIYVNE) are extracellular. The chain crosses the membrane as a helical span at residues 197–219 (LMIYILGGLIIIIPFLLIVMSYV). Residues 220 to 236 (RIFFSILKFPSIQDIYK) lie on the Cytoplasmic side of the membrane. The chain crosses the membrane as a helical span at residues 237–260 (VFSTCGSHLSVVTLFYGTIFGIYL). Residues 261 to 272 (CPSGNNSTVKEI) lie on the Extracellular side of the membrane. A helical membrane pass occupies residues 273–292 (AMAMMYTVVTPMLNPFIYSL). Residues 293–312 (RNRDMKRALIRVICTKKISL) lie on the Cytoplasmic side of the membrane.

This sequence belongs to the G-protein coupled receptor 1 family. As to expression, olfactory epithelium.

It is found in the cell membrane. Functionally, odorant receptor. The chain is Olfactory receptor 1500 (Olr1500) from Rattus norvegicus (Rat).